An 84-amino-acid polypeptide reads, in one-letter code: Small ribosomal subunit protein uS17 (84 aa).

It belongs to the universal ribosomal protein uS17 family. Part of the 30S ribosomal subunit.

Functionally, one of the primary rRNA binding proteins, it binds specifically to the 5'-end of 16S ribosomal RNA. This chain is Small ribosomal subunit protein uS17, found in Clostridium perfringens (strain SM101 / Type A).